A 235-amino-acid chain; its full sequence is 1-(5-phosphoribosyl)-5-[(5-phosphoribosylamino)methylideneamino] imidazole-4-carboxamide isomerase (235 aa).

The Proton acceptor role is filled by aspartate 8. The active-site Proton donor is the aspartate 127.

The protein belongs to the HisA/HisF family.

It localises to the cytoplasm. It catalyses the reaction 1-(5-phospho-beta-D-ribosyl)-5-[(5-phospho-beta-D-ribosylamino)methylideneamino]imidazole-4-carboxamide = 5-[(5-phospho-1-deoxy-D-ribulos-1-ylimino)methylamino]-1-(5-phospho-beta-D-ribosyl)imidazole-4-carboxamide. Its pathway is amino-acid biosynthesis; L-histidine biosynthesis; L-histidine from 5-phospho-alpha-D-ribose 1-diphosphate: step 4/9. This chain is 1-(5-phosphoribosyl)-5-[(5-phosphoribosylamino)methylideneamino] imidazole-4-carboxamide isomerase, found in Aliarcobacter butzleri (strain RM4018) (Arcobacter butzleri).